Consider the following 1203-residue polypeptide: DNA-directed RNA polymerase subunit beta' (1203 aa).

4 residues coordinate Zn(2+): Cys60, Cys62, Cys75, and Cys78. Asp449, Asp451, and Asp453 together coordinate Mg(2+). The Zn(2+) site is built by Cys818, Cys892, Cys899, and Cys902.

This sequence belongs to the RNA polymerase beta' chain family. The RNAP catalytic core consists of 2 alpha, 1 beta, 1 beta' and 1 omega subunit. When a sigma factor is associated with the core the holoenzyme is formed, which can initiate transcription. Requires Mg(2+) as cofactor. The cofactor is Zn(2+).

The enzyme catalyses RNA(n) + a ribonucleoside 5'-triphosphate = RNA(n+1) + diphosphate. Functionally, DNA-dependent RNA polymerase catalyzes the transcription of DNA into RNA using the four ribonucleoside triphosphates as substrates. In Bacillus thuringiensis (strain Al Hakam), this protein is DNA-directed RNA polymerase subunit beta'.